The sequence spans 262 residues: Iso-A82775C biosynthesis cluster protein B (262 aa).

Its function is as follows. Part of the gene cluster that mediates the biosynthesis of iso-A82775C, a enylepoxycyclohexane and biosynthetic precursor of the chloropestolide anticancer natural products. Within the cluster, the prenyltransferase iacE prenylates siccayne to generate pestalodiol E, using dimethylallyl diphosphate (DMAPP) as cosubstrate. The probable oxidoreductase iacF is then involved in the epoxidation of pestalodiol F to pestalodiol F, which is further converted to pestalofone A by the short-chain dehydrogenase/reductase iacG. Iso-A82775C is subsequently generated from pestalofone A by the short-chain dehydrogenase/reductase iacC. Iso-A82775C is further condensed with maldoxin via a Diels-Alder reaction to produce the anticancer natural products chloropestolides A to E. The chain is Iso-A82775C biosynthesis cluster protein B from Pestalotiopsis fici (strain W106-1 / CGMCC3.15140).